The primary structure comprises 1188 residues: Carboxylic acid reductase (1188 aa).

AMP contacts are provided by residues H315, S408, 429–430, T434, D507, 519–522, K528, and K629; these read DG and YVDR. A Carrier domain is found at 665-743; that stretch reads AGERPVIETV…SVAAHIEKER (79 aa). S702 carries the O-(pantetheine 4'-phosphoryl)serine modification. NADP(+) contacts are provided by residues 801–804, R828, R838, 868–869, 894–896, S934, Y970, K974, and S997; these read NGWL, DF, and SGA.

The protein belongs to the ATP-dependent AMP-binding enzyme family. Carboxylic acid reductase subfamily. Pantetheine 4'-phosphate serves as cofactor.

It catalyses the reaction a carboxylate + ATP + NADPH + H(+) = an aldehyde + AMP + diphosphate + NADP(+). Its function is as follows. Catalyzes the ATP- and NADPH-dependent reduction of carboxylic acids to the corresponding aldehydes. Catalyzes the reduction of a very wide range of carboxylic acids, including benzoic acids, heterocyclic, phenylacetic, phenylpropanoic and fatty acid substrates. The sequence is that of Carboxylic acid reductase from Segniliparus rugosus (strain ATCC BAA-974 / DSM 45345 / CCUG 50838 / CIP 108380 / JCM 13579 / CDC 945).